The sequence spans 322 residues: MSGELPPNINIKEPRWDQSTFIGRANHFFTVTDPRNILLTNEQLESARKIVHDYRQGIVPPGLTENELWRAKYIYDSAFHPDTGEKMILIGRMSAQVPMNMTITGCMMTFYRTTPAVLFWQWINQSFNAVVNYTNRSGDAPLTVNELGTAYVSATTGAVATALGLNALTKHVSPLIGRFVPFAAVAAANCINIPLMRQRELKVGIPVTDENGNRLGESANAAKQAITQVVVSRILMAAPGMAIPPFIMNTLEKKAFLKRFPWMSAPIQVGLVGFCLVFATPLCCALFPQKSSMSVTSLEAELQAKIQESHPELRRVYFNKGL.

N-acetylserine is present on serine 2. At 2 to 102 (SGELPPNINI…MSAQVPMNMT (101 aa)) the chain is on the mitochondrial matrix side. Residues 103–120 (ITGCMMTFYRTTPAVLFW) traverse the membrane as a helical segment. At 121-146 (QWINQSFNAVVNYTNRSGDAPLTVNE) the chain is on the mitochondrial intermembrane side. Residues 147-167 (LGTAYVSATTGAVATALGLNA) traverse the membrane as a helical segment. The Mitochondrial matrix segment spans residues 168-174 (LTKHVSP). Residues 175–195 (LIGRFVPFAAVAAANCINIPL) traverse the membrane as a helical segment. Over 196–228 (MRQRELKVGIPVTDENGNRLGESANAAKQAITQ) the chain is Mitochondrial intermembrane. The helical transmembrane segment at 229-249 (VVVSRILMAAPGMAIPPFIMN) threads the bilayer. At 250 to 266 (TLEKKAFLKRFPWMSAP) the chain is on the mitochondrial matrix side. Residues 267 to 287 (IQVGLVGFCLVFATPLCCALF) traverse the membrane as a helical segment. Residues 288-322 (PQKSSMSVTSLEAELQAKIQESHPELRRVYFNKGL) lie on the Mitochondrial intermembrane side of the membrane.

It belongs to the sideroflexin family. Highly expressed in tissues with high one-carbon metabolism activity, such as blood, liver and kidney.

It is found in the mitochondrion inner membrane. The catalysed reaction is L-serine(in) = L-serine(out). The enzyme catalyses L-alanine(in) = L-alanine(out). It carries out the reaction L-cysteine(in) = L-cysteine(out). In terms of biological role, amino acid transporter importing serine, an essential substrate of the mitochondrial branch of the one-carbon pathway, into mitochondria. Mitochondrial serine is then converted to glycine and formate, which exits to the cytosol where it is used to generate the charged folates that serve as one-carbon donors. May also transport other amino acids including alanine and cysteine. The chain is Sideroflexin-1 from Homo sapiens (Human).